We begin with the raw amino-acid sequence, 615 residues long: Glutamine--fructose-6-phosphate aminotransferase [isomerizing] (615 aa).

The Nucleophile; for GATase activity role is filled by cysteine 2. One can recognise a Glutamine amidotransferase type-2 domain in the interval 2-220 (CGIVGYVGPQ…QDQVVELRRD (219 aa)). 2 consecutive SIS domains span residues 287–427 (IPPG…VRGT) and 460–605 (LARS…VDQP). Catalysis depends on lysine 610, which acts as the For Fru-6P isomerization activity.

In terms of assembly, homodimer.

Its subcellular location is the cytoplasm. It catalyses the reaction D-fructose 6-phosphate + L-glutamine = D-glucosamine 6-phosphate + L-glutamate. Functionally, catalyzes the first step in hexosamine metabolism, converting fructose-6P into glucosamine-6P using glutamine as a nitrogen source. In Streptomyces coelicolor (strain ATCC BAA-471 / A3(2) / M145), this protein is Glutamine--fructose-6-phosphate aminotransferase [isomerizing].